The primary structure comprises 622 residues: Low affinity potassium transport system protein Kup (622 aa).

12 consecutive transmembrane segments (helical) span residues 9–29 (LPAI…TSPL), 49–69 (VFGF…IKYL), 103–123 (VIMG…TPAI), 137–157 (PQLD…LFMI), 165–185 (VGKL…GLGL), 213–233 (VSFI…ALYA), 247–267 (WFTV…ALLL), 276–296 (PFFL…AALA), 337–357 (IYIP…IVSF), 363–383 (LAAA…ILST), 396–416 (FVAL…TANL), and 419–439 (LLSG…VMTT).

Belongs to the HAK/KUP transporter (TC 2.A.72) family.

It localises to the cell inner membrane. The enzyme catalyses K(+)(in) + H(+)(in) = K(+)(out) + H(+)(out). Its function is as follows. Responsible for the low-affinity transport of potassium into the cell. Likely operates as a K(+):H(+) symporter. The chain is Low affinity potassium transport system protein Kup from Escherichia coli (strain K12 / MC4100 / BW2952).